A 315-amino-acid polypeptide reads, in one-letter code: MRVVFMGTPDFAVGTLKAIIEAGHDVAAVVTQPDKPRGRSKSLVFSPVKDEAVAHGITVLQPERARDEAFVEELRTYNADVIVVVAFGQLLPASIINMPRYGCINVHASLLPKYRGASPIQWAVIDGCEYSGVTTMKMDEGLDTGDILMVEKVKLDAKETGGSLFDRLSDVGAHLLVKTLEGLEAGTITPVKQDDSESTYVKMLHKSFGKMDFNKSAAELERLIRGLNPWPSAFTYIDGKMLKIWDADVADNISEVQTEEVKPGQVVTVGKNTFTIACGQGYLVVNEVQLEGKKRMDSGSFLRGNQLEAGVMLGE.

109–112 (SLLP) contacts (6S)-5,6,7,8-tetrahydrofolate.

Belongs to the Fmt family.

It catalyses the reaction L-methionyl-tRNA(fMet) + (6R)-10-formyltetrahydrofolate = N-formyl-L-methionyl-tRNA(fMet) + (6S)-5,6,7,8-tetrahydrofolate + H(+). In terms of biological role, attaches a formyl group to the free amino group of methionyl-tRNA(fMet). The formyl group appears to play a dual role in the initiator identity of N-formylmethionyl-tRNA by promoting its recognition by IF2 and preventing the misappropriation of this tRNA by the elongation apparatus. The chain is Methionyl-tRNA formyltransferase from Lachnospira eligens (strain ATCC 27750 / DSM 3376 / VPI C15-48 / C15-B4) (Eubacterium eligens).